The primary structure comprises 1177 residues: DNA-directed RNA polymerase subunit beta' (1177 aa).

Positions 60, 62, 75, and 78 each coordinate Zn(2+). Mg(2+)-binding residues include Asp-450, Asp-452, and Asp-454. Zn(2+) contacts are provided by Cys-795, Cys-869, Cys-876, and Cys-879.

This sequence belongs to the RNA polymerase beta' chain family. The RNAP catalytic core consists of 2 alpha, 1 beta, 1 beta' and 1 omega subunit. When a sigma factor is associated with the core the holoenzyme is formed, which can initiate transcription. Mg(2+) serves as cofactor. Zn(2+) is required as a cofactor.

It catalyses the reaction RNA(n) + a ribonucleoside 5'-triphosphate = RNA(n+1) + diphosphate. DNA-dependent RNA polymerase catalyzes the transcription of DNA into RNA using the four ribonucleoside triphosphates as substrates. The sequence is that of DNA-directed RNA polymerase subunit beta' from Clostridium botulinum (strain Alaska E43 / Type E3).